The following is a 62-amino-acid chain: Photosystem II reaction center protein H (62 aa).

Residues 30–50 (PVMAGIGFMLLIFLVTILQIY) form a helical membrane-spanning segment.

It belongs to the PsbH family. PSII is composed of 1 copy each of membrane proteins PsbA, PsbB, PsbC, PsbD, PsbE, PsbF, PsbH, PsbI, PsbJ, PsbK, PsbL, PsbM, PsbT, PsbX, PsbY, Psb30/Ycf12, peripheral proteins PsbO, CyanoQ (PsbQ), PsbU, PsbV and a large number of cofactors. It forms dimeric complexes.

It is found in the cellular thylakoid membrane. Its function is as follows. One of the components of the core complex of photosystem II (PSII), required for its stability and/or assembly. PSII is a light-driven water:plastoquinone oxidoreductase that uses light energy to abstract electrons from H(2)O, generating O(2) and a proton gradient subsequently used for ATP formation. It consists of a core antenna complex that captures photons, and an electron transfer chain that converts photonic excitation into a charge separation. In Prochlorococcus marinus (strain MIT 9303), this protein is Photosystem II reaction center protein H.